Here is a 163-residue protein sequence, read N- to C-terminus: ATP synthase subunit delta, chloroplastic (163 aa).

The protein belongs to the ATPase delta chain family. In terms of assembly, F-type ATPases have 2 components, F(1) - the catalytic core - and F(0) - the membrane proton channel. F(1) has five subunits: alpha(3), beta(3), gamma(1), delta(1), epsilon(1). CF(0) has four main subunits: a(1), b(1), b'(1) and c(10-14). The alpha and beta chains form an alternating ring which encloses part of the gamma chain. F(1) is attached to F(0) by a central stalk formed by the gamma and epsilon chains, while a peripheral stalk is formed by the delta, b and b' chains.

The protein localises to the plastid. It is found in the chloroplast thylakoid membrane. Functionally, f(1)F(0) ATP synthase produces ATP from ADP in the presence of a proton or sodium gradient. F-type ATPases consist of two structural domains, F(1) containing the extramembraneous catalytic core and F(0) containing the membrane proton channel, linked together by a central stalk and a peripheral stalk. During catalysis, ATP synthesis in the catalytic domain of F(1) is coupled via a rotary mechanism of the central stalk subunits to proton translocation. This protein is part of the stalk that links CF(0) to CF(1). It either transmits conformational changes from CF(0) to CF(1) or is implicated in proton conduction. The polypeptide is ATP synthase subunit delta, chloroplastic (Cyanidioschyzon merolae (strain NIES-3377 / 10D) (Unicellular red alga)).